The primary structure comprises 614 residues: Acetylcholinesterase (614 aa).

The signal sequence occupies residues 1-31; sequence MRPPWYPLHTPSLAFPLLFLLLSLLGGGARA. A disulfide bridge links Cys-100 with Cys-127. The active-site Acyl-ester intermediate is Ser-234. Cys-288 and Cys-303 are oxidised to a cystine. The N-linked (GlcNAc...) asparagine glycan is linked to Asn-296. The active-site Charge relay system is Glu-365. Asn-381 carries N-linked (GlcNAc...) asparagine glycosylation. An intrachain disulfide couples Cys-440 to Cys-560. Residue His-478 is the Charge relay system of the active site. N-linked (GlcNAc...) asparagine glycosylation occurs at Asn-495.

The protein belongs to the type-B carboxylesterase/lipase family. As to quaternary structure, isoform H generates GPI-anchored dimers; disulfide linked. Isoform T generates multiple structures, ranging from monomers and dimers to collagen-tailed and hydrophobic-tailed forms, in which catalytic tetramers are associated with anchoring proteins that attach them to the basal lamina or to cell membranes. In the collagen-tailed forms, isoform T subunits are associated with a specific collagen, COLQ, which triggers the formation of isoform T tetramers, from monomers and dimers. Interacts with PRIMA1. The interaction with PRIMA1 is required to anchor it to the basal lamina of cells and organize into tetramers. In terms of tissue distribution, predominates in most expressing tissues except erythrocytes where a glycophospholipid-attached form of ACHE predominates.

It is found in the synapse. The protein resides in the secreted. Its subcellular location is the cell membrane. It catalyses the reaction acetylcholine + H2O = choline + acetate + H(+). In terms of biological role, terminates signal transduction at the neuromuscular junction by rapid hydrolysis of the acetylcholine released into the synaptic cleft. The chain is Acetylcholinesterase (Ache) from Mus musculus (Mouse).